Reading from the N-terminus, the 311-residue chain is 2-dehydro-3-deoxygluconokinase (311 aa).

Substrate-binding positions include 34-35, 106-108, and R166; these read GS and YYR. Residues 164 to 166, 224 to 229, 253 to 256, and S283 each bind ATP; these read NIR, KLGPKG, and GAGD. Substrate-binding residues include G253 and D256. The Proton acceptor role is filled by D256. A substrate-binding site is contributed by D292.

The protein belongs to the carbohydrate kinase PfkB family. Homotetramer. It depends on a divalent metal cation as a cofactor.

The catalysed reaction is 2-dehydro-3-deoxy-D-gluconate + ATP = 2-dehydro-3-deoxy-6-phospho-D-gluconate + ADP + H(+). It participates in carbohydrate acid metabolism; 2-dehydro-3-deoxy-D-gluconate degradation; D-glyceraldehyde 3-phosphate and pyruvate from 2-dehydro-3-deoxy-D-gluconate: step 1/2. Its function is as follows. Involved in the degradation of glucose via the semi-phosphorylative Entner-Doudoroff pathway. Catalyzes the phosphorylation of 2-keto-3-deoxygluconate (KDG) to produce 2-keto-3-deoxy-6-phosphogluconate (KDPG). Can also use GTP, but not ADP or AMP, as a phosphoryl donor and 2-keto-D-gluconate (KG) as a phosphoryl acceptor. The protein is 2-dehydro-3-deoxygluconokinase of Sulfurisphaera tokodaii (strain DSM 16993 / JCM 10545 / NBRC 100140 / 7) (Sulfolobus tokodaii).